The following is a 382-amino-acid chain: Mitogen-activated protein kinase 9 (382 aa).

A Protein kinase domain is found at 26-321; that stretch reads YQQLKPIGSG…VDEALRHPYI (296 aa). ATP-binding positions include 33-38 and lysine 55; that span reads GSGAQG. Aspartate 151 acts as the Proton acceptor in catalysis. Threonine 183 is modified (phosphothreonine). The short motif at 183 to 185 is the TXY element; that stretch reads TPY. A Phosphotyrosine modification is found at tyrosine 185.

It belongs to the protein kinase superfamily. CMGC Ser/Thr protein kinase family. MAP kinase subfamily. Mg(2+) is required as a cofactor. Post-translationally, dually phosphorylated on Thr-183 and Tyr-185, which activates the enzyme. In terms of tissue distribution, expressed in the neuroepithelium of developing brain at stages 16 to 26.

The enzyme catalyses L-seryl-[protein] + ATP = O-phospho-L-seryl-[protein] + ADP + H(+). It carries out the reaction L-threonyl-[protein] + ATP = O-phospho-L-threonyl-[protein] + ADP + H(+). Activated by threonine and tyrosine phosphorylation. In terms of biological role, responds to activation by environmental stress and pro-inflammatory cytokines by phosphorylating a number of transcription factors, primarily components of AP-1 such as JUN and ATF2 and thus regulates AP-1 transcriptional activity. May play a role in the development of the central nervous system during embryogenesis. May play a role in the regulation of the circadian clock. This is Mitogen-activated protein kinase 9 (MAPK9) from Gallus gallus (Chicken).